A 601-amino-acid chain; its full sequence is Abscisic acid cluster transcription factor abl7 (601 aa).

Positions 13 to 40 (CDECRRRKLKCDRVRPQCGTCALSESEC) form a DNA-binding region, zn(2)-C6 fungal-type.

The protein resides in the nucleus. Transcription factor that regulates the expression of the gene cluster that mediates the biosynthesis of abscisic acid (ABA), a phytohormone that acts antagonistically toward salicylic acid (SA), jasmonic acid (JA) and ethylene (ETH) signaling, to impede plant defense responses. The polypeptide is Abscisic acid cluster transcription factor abl7 (Leptosphaeria maculans (strain JN3 / isolate v23.1.3 / race Av1-4-5-6-7-8) (Blackleg fungus)).